Consider the following 142-residue polypeptide: Ribosome maturation factor RimP (142 aa).

The protein belongs to the RimP family.

The protein localises to the cytoplasm. Required for maturation of 30S ribosomal subunits. This chain is Ribosome maturation factor RimP, found in Wolinella succinogenes (strain ATCC 29543 / DSM 1740 / CCUG 13145 / JCM 31913 / LMG 7466 / NCTC 11488 / FDC 602W) (Vibrio succinogenes).